The following is an 86-amino-acid chain: Small ribosomal subunit protein bS20 (86 aa).

Residues 1–22 (MANIKSAKKRAVQSEKRRKHNA) are compositionally biased toward basic residues. The disordered stretch occupies residues 1–28 (MANIKSAKKRAVQSEKRRKHNASGRSMM).

This sequence belongs to the bacterial ribosomal protein bS20 family.

Binds directly to 16S ribosomal RNA. This is Small ribosomal subunit protein bS20 from Serratia proteamaculans (strain 568).